The sequence spans 71 residues: Palustrin-Ca (71 aa).

The N-terminal stretch at 1–22 is a signal peptide; that stretch reads MFTLKKSLLLLFFLGTISLSLC. Positions 23–40 are excised as a propeptide; the sequence is EQERDADGDEGEVEEVKR. Cysteine 63 and cysteine 69 are oxidised to a cystine.

It belongs to the frog skin active peptide (FSAP) family. Brevinin subfamily. As to expression, expressed by the skin glands.

Its subcellular location is the secreted. It is found in the target cell membrane. Its function is as follows. Antibacterial peptide with amphipathic alpha-helical structure that exhibits potent broad-spectrum activity against Gram-positive and -negative bacteria. It is active against Listeria ATCC 54004 (MIC=30 ug/ml), S.aureus ATCC 25923 (MIC=7.8 ug/ml), S.suis 2 CVCC 606 (MIC=31.25 ug/ml), B.subtilis ADB403 (30 ug/ml), K.pneumoniae ATCC 700603 (MIC=60 ug/ml) and P.aeruginosa ATCC 227853 (MIC=30 ug/ml). Does not show activity against Salmonella ATCC 20020 and the fungus Candida albicans. Is also cytotoxic to HeLa cells at high concentrations. In addition, shows a strong antitumor activity but only a little hemolytic activity. Despite the presence of a Gly residue at position 10, this alpha-helical peptide remains relatively rigid, not exhibiting any significant flexibility during the molecular dynamics simulation. The peptide shows a preference for a position parallel to the target membrane that suggests it exerts its antimicrobial activity through a non-pore-forming mechanism of action, such as the carpet model or the interfacial activity model. This is Palustrin-Ca from Aquarana catesbeiana (American bullfrog).